We begin with the raw amino-acid sequence, 68 residues long: SERF-like protein YDL085C-A (68 aa).

Basic and acidic residues-rich tracts occupy residues 1–43 (MARG…EILR) and 50–68 (DARREAEKLEKLKAEKTRR). Residues 1–68 (MARGNQRDLA…EKLKAEKTRR (68 aa)) are disordered. A Phosphoserine modification is found at serine 37.

The protein belongs to the SERF family.

The protein localises to the cytoplasm. It localises to the nucleus. This is SERF-like protein YDL085C-A from Saccharomyces cerevisiae (strain ATCC 204508 / S288c) (Baker's yeast).